Consider the following 330-residue polypeptide: Flotillin-like protein FloA (330 aa).

Helical transmembrane passes span 6 to 26 (LFLL…FTFV) and 28 to 48 (VMLW…TLIG).

The protein belongs to the flotillin-like FloA family. Homooligomerizes.

Its subcellular location is the cell membrane. It localises to the membrane raft. Its function is as follows. Found in functional membrane microdomains (FMM) that may be equivalent to eukaryotic membrane rafts. FMMs are highly dynamic and increase in number as cells age. Flotillins are thought to be important factors in membrane fluidity. This is Flotillin-like protein FloA from Bacillus licheniformis (strain ATCC 14580 / DSM 13 / JCM 2505 / CCUG 7422 / NBRC 12200 / NCIMB 9375 / NCTC 10341 / NRRL NRS-1264 / Gibson 46).